Here is a 95-residue protein sequence, read N- to C-terminus: Nucleoid-associated protein MMOB0740 (95 aa).

This sequence belongs to the YbaB/EbfC family. In terms of assembly, homodimer.

The protein localises to the cytoplasm. It is found in the nucleoid. Functionally, binds to DNA and alters its conformation. May be involved in regulation of gene expression, nucleoid organization and DNA protection. This chain is Nucleoid-associated protein MMOB0740, found in Mycoplasma mobile (strain ATCC 43663 / 163K / NCTC 11711) (Mesomycoplasma mobile).